The chain runs to 144 residues: MKSVLIFLVAIALFSANIVSADEQTTRGRHTEPDDHHEKPTTQCTHEETTSTQHHHEEVVTTQTPHHEEKTTTEETHHSDDLIVHEGGKTYHVVCHEEGPIHIQEMCNKYIICSKSGSLWYITVMPCSIGTKFDPISRNCVLDN.

The N-terminal stretch at 1–20 (MKSVLIFLVAIALFSANIVS) is a signal peptide. The segment at 24–77 (QTTRGRHTEPDDHHEKPTTQCTHEETTSTQHHHEEVVTTQTPHHEEKTTTEETH) is disordered. The Chitin-binding type-2 domain maps to 92 to 144 (HVVCHEEGPIHIQEMCNKYIICSKSGSLWYITVMPCSIGTKFDPISRNCVLDN). Cysteines 127 and 140 form a disulfide.

This chain is Major allergen Blo t 12, found in Blomia tropicalis (Mite).